A 155-amino-acid chain; its full sequence is 2-C-methyl-D-erythritol 2,4-cyclodiphosphate synthase (155 aa).

The a divalent metal cation site is built by Asp-8 and His-10. Residues Asp-8–His-10 and His-34–Ser-35 contribute to the 4-CDP-2-C-methyl-D-erythritol 2-phosphate site. A divalent metal cation is bound at residue His-42. Residues Asp-56 to Gly-58, Phe-61 to Asp-65, Ala-100 to Leu-106, Thr-132 to Glu-135, Phe-139, and Lys-142 each bind 4-CDP-2-C-methyl-D-erythritol 2-phosphate.

Belongs to the IspF family. As to quaternary structure, homotrimer. It depends on a divalent metal cation as a cofactor.

It catalyses the reaction 4-CDP-2-C-methyl-D-erythritol 2-phosphate = 2-C-methyl-D-erythritol 2,4-cyclic diphosphate + CMP. It functions in the pathway isoprenoid biosynthesis; isopentenyl diphosphate biosynthesis via DXP pathway; isopentenyl diphosphate from 1-deoxy-D-xylulose 5-phosphate: step 4/6. Involved in the biosynthesis of isopentenyl diphosphate (IPP) and dimethylallyl diphosphate (DMAPP), two major building blocks of isoprenoid compounds. Catalyzes the conversion of 4-diphosphocytidyl-2-C-methyl-D-erythritol 2-phosphate (CDP-ME2P) to 2-C-methyl-D-erythritol 2,4-cyclodiphosphate (ME-CPP) with a corresponding release of cytidine 5-monophosphate (CMP). This chain is 2-C-methyl-D-erythritol 2,4-cyclodiphosphate synthase, found in Clostridium botulinum (strain ATCC 19397 / Type A).